We begin with the raw amino-acid sequence, 456 residues long: Phosphomannomutase (456 aa).

The Phosphoserine intermediate role is filled by Ser98. Positions 98, 245, 247, and 249 each coordinate Mg(2+).

This sequence belongs to the phosphohexose mutase family. Mg(2+) serves as cofactor.

It catalyses the reaction alpha-D-mannose 1-phosphate = D-mannose 6-phosphate. It functions in the pathway nucleotide-sugar biosynthesis; GDP-alpha-D-mannose biosynthesis; alpha-D-mannose 1-phosphate from D-fructose 6-phosphate: step 2/2. Functionally, involved in the biosynthesis of the capsular polysaccharide colanic acid. The protein is Phosphomannomutase (manB) of Escherichia coli (strain K12).